The primary structure comprises 260 residues: Cytochrome c1-2, heme protein, mitochondrial (260 aa).

The transit peptide at 1–17 directs the protein to the mitochondrion; sequence IGAGVSGLLGFATVASA. Residues 18–221 are Mitochondrial intermembrane-facing; it reads DEAEHGLECP…AAEPEMEERK (204 aa). A Cytochrome c domain is found at 43–150; it reads ASIRRGHQVY…NGQNYVFALL (108 aa). 4 residues coordinate heme c: C56, C59, H60, and M179. Residues 222-241 form a helical membrane-spanning segment; that stretch reads LMGFKWIFVLSLALLQAAYY. At 242–260 the chain is on the mitochondrial matrix side; it reads RRLRWSVLKSRKLVLDVVN.

It belongs to the cytochrome c family. In terms of assembly, component of the ubiquinol-cytochrome c oxidoreductase (cytochrome b-c1 complex, complex III, CIII), a multisubunit enzyme composed of 3 respiratory subunits cytochrome b, cytochrome c1 and Rieske protein, 2 core protein subunits, and additional low-molecular weight protein subunits. The complex exists as an obligatory dimer and forms supercomplexes (SCs) in the inner mitochondrial membrane with cytochrome c oxidase (complex IV, CIV). The cofactor is heme c. As to expression, in all tissues analyzed.

The protein resides in the mitochondrion inner membrane. It carries out the reaction a quinol + 2 Fe(III)-[cytochrome c](out) = a quinone + 2 Fe(II)-[cytochrome c](out) + 2 H(+)(out). Its function is as follows. Component of the ubiquinol-cytochrome c oxidoreductase, a multisubunit transmembrane complex that is part of the mitochondrial electron transport chain which drives oxidative phosphorylation. The respiratory chain contains 3 multisubunit complexes succinate dehydrogenase (complex II, CII), ubiquinol-cytochrome c oxidoreductase (cytochrome b-c1 complex, complex III, CIII) and cytochrome c oxidase (complex IV, CIV), that cooperate to transfer electrons derived from NADH and succinate to molecular oxygen, creating an electrochemical gradient over the inner membrane that drives transmembrane transport and the ATP synthase. The cytochrome b-c1 complex catalyzes electron transfer from ubiquinol to cytochrome c, linking this redox reaction to translocation of protons across the mitochondrial inner membrane, with protons being carried across the membrane as hydrogens on the quinol. In the process called Q cycle, 2 protons are consumed from the matrix, 4 protons are released into the intermembrane space and 2 electrons are passed to cytochrome c. Cytochrome c1 is a catalytic core subunit containing a c-type heme. It transfers electrons from the [2Fe-2S] iron-sulfur cluster of the Rieske protein to cytochrome c. The protein is Cytochrome c1-2, heme protein, mitochondrial (CYCL) of Solanum tuberosum (Potato).